A 557-amino-acid polypeptide reads, in one-letter code: Acid-sensing ion channel 1B (557 aa).

Topologically, residues 1 to 98 (MVRITCTISF…SIRQGLWALV (98 aa)) are cytoplasmic. A compositionally biased stretch (basic and acidic residues) spans 36 to 45 (KDGEQGKYQE). Positions 36–57 (KDGEQGKYQEEGDDPDAYDGPE) are disordered. Residues 46 to 57 (EGDDPDAYDGPE) are compositionally biased toward acidic residues. Residues 99–115 (FLLAISMFLLQVVDRVI) traverse the membrane as a helical segment. The Extracellular segment spans residues 116–460 (YYLQYDYVTL…ETIEQKKAYE (345 aa)). N-linked (GlcNAc...) asparagine glycans are attached at residues Asn-133 and Asn-194. Disulfide bonds link Cys-142–Cys-229, Cys-207–Cys-214, Cys-325–Cys-400, Cys-343–Cys-396, Cys-347–Cys-394, Cys-356–Cys-378, and Cys-358–Cys-370. N-linked (GlcNAc...) asparagine glycans are attached at residues Asn-401 and Asn-428. A discontinuously helical transmembrane segment spans residues 461-491 (LAGLLGDIGGQMGLFIGASILTILELFDYLY). Positions 477-479 (GAS) match the GAS motif; ion selectivity filter motif. Residues 492–557 (EVIKFKLCRC…GQGNFEDFTC (66 aa)) are Cytoplasmic-facing.

Belongs to the amiloride-sensitive sodium channel (TC 1.A.6) family. ASIC1 subfamily. In terms of assembly, homotrimer. Heterotrimer; with other ASIC proteins producing channel with different properties. In terms of tissue distribution, expressed in central nervous system.

Its subcellular location is the cell membrane. It localises to the postsynaptic cell membrane. The protein resides in the cell projection. It is found in the dendrite. The enzyme catalyses Na(+)(in) = Na(+)(out). The catalysed reaction is K(+)(in) = K(+)(out). It catalyses the reaction Li(+)(in) = Li(+)(out). It carries out the reaction Ca(2+)(in) = Ca(2+)(out). With respect to regulation, inhibited by the diuretic drug amiloride. Its function is as follows. Forms voltage-independent, pH-gated trimeric sodium channels that act as postsynaptic excitatory receptors in the nervous system, playing a crucial role in regulating synaptic plasticity, learning, and memory. Upon extracellular pH drop this channel elicits transient, fast activating, and completely desensitizing inward currents. Displays high selectivity for sodium ions but can also permit the permeation of other cations. In Danio rerio (Zebrafish), this protein is Acid-sensing ion channel 1B (asic1b).